The primary structure comprises 187 residues: UPF0340 protein SPJ_0612 (187 aa).

It belongs to the UPF0340 family.

In Streptococcus pneumoniae (strain JJA), this protein is UPF0340 protein SPJ_0612.